A 270-amino-acid chain; its full sequence is tRNA pseudouridine synthase A (270 aa).

The active-site Nucleophile is the Asp-60. The tract at residues 107 to 111 is RNA binding; sequence FHARF. Substrate is bound at residue Tyr-118. Positions 168–172 are interaction with tRNA; it reads QCQSR.

Belongs to the tRNA pseudouridine synthase TruA family. As to quaternary structure, homodimer.

The catalysed reaction is uridine(38/39/40) in tRNA = pseudouridine(38/39/40) in tRNA. Its function is as follows. Formation of pseudouridine at positions 38, 39 and 40 in the anticodon stem and loop of transfer RNAs. This Klebsiella pneumoniae subsp. pneumoniae (strain ATCC 700721 / MGH 78578) protein is tRNA pseudouridine synthase A.